A 514-amino-acid polypeptide reads, in one-letter code: Bifunctional purine biosynthesis protein PurH (514 aa).

The 142-residue stretch at 1–142 (MLALLSVSDK…KNFRHVSVVV (142 aa)) folds into the MGS-like domain.

The protein belongs to the PurH family.

It carries out the reaction (6R)-10-formyltetrahydrofolate + 5-amino-1-(5-phospho-beta-D-ribosyl)imidazole-4-carboxamide = 5-formamido-1-(5-phospho-D-ribosyl)imidazole-4-carboxamide + (6S)-5,6,7,8-tetrahydrofolate. It catalyses the reaction IMP + H2O = 5-formamido-1-(5-phospho-D-ribosyl)imidazole-4-carboxamide. It participates in purine metabolism; IMP biosynthesis via de novo pathway; 5-formamido-1-(5-phospho-D-ribosyl)imidazole-4-carboxamide from 5-amino-1-(5-phospho-D-ribosyl)imidazole-4-carboxamide (10-formyl THF route): step 1/1. The protein operates within purine metabolism; IMP biosynthesis via de novo pathway; IMP from 5-formamido-1-(5-phospho-D-ribosyl)imidazole-4-carboxamide: step 1/1. The sequence is that of Bifunctional purine biosynthesis protein PurH from Myxococcus xanthus (strain DK1622).